The chain runs to 1041 residues: Protein SMAX1-like (1041 aa).

The Clp R domain occupies 8–188 (IQQTLTPEAA…KSIIEQSLSA (181 aa)). Repeat regions lie at residues 12-98 (LTPE…LDRL) and 117-188 (VSNA…SLSA). Residues 189 to 205 (PSPCPSAAASTTTAGPG) show a composition bias toward low complexity. Disordered stretches follow at residues 189-214 (PSPC…PSPL), 482-513 (EAEQ…QNKA), and 889-913 (EGSH…VKRS). Positions 482 to 495 (EAEQTDKPASRPEA) are enriched in basic and acidic residues. Positions 891-900 (SHNSSDVSVE) are enriched in polar residues.

Belongs to the ClpA/ClpB family.

May act downstream of MAX2 to negatively regulate karrikins/strigolactone responses. Acts probably specifically in the karrikin pathway. May function in a transcriptional corepressor complex. The protein is Protein SMAX1-like of Oryza sativa subsp. japonica (Rice).